The primary structure comprises 550 residues: Chaperonin GroEL (550 aa).

Residues threonine 30–proline 33, lysine 51, aspartate 87–threonine 91, glycine 415, and aspartate 497 contribute to the ATP site.

It belongs to the chaperonin (HSP60) family. Forms a cylinder of 14 subunits composed of two heptameric rings stacked back-to-back. Interacts with the co-chaperonin GroES.

It localises to the cytoplasm. The catalysed reaction is ATP + H2O + a folded polypeptide = ADP + phosphate + an unfolded polypeptide.. In terms of biological role, together with its co-chaperonin GroES, plays an essential role in assisting protein folding. The GroEL-GroES system forms a nano-cage that allows encapsulation of the non-native substrate proteins and provides a physical environment optimized to promote and accelerate protein folding. The chain is Chaperonin GroEL from Yersinia enterocolitica serotype O:8 / biotype 1B (strain NCTC 13174 / 8081).